The following is a 306-amino-acid chain: D-alanine--D-alanine ligase (306 aa).

Positions 101 to 303 (KQVWQAVGLP…FSQLVVKILE (203 aa)) constitute an ATP-grasp domain. Position 134–189 (134–189 (FTHLGLPLIVKPSREGSSVGMSKVNTLSELPAALEEAFRHDDDILVEKWLSGPEYT)) interacts with ATP. Positions 257, 270, and 272 each coordinate Mg(2+).

Belongs to the D-alanine--D-alanine ligase family. It depends on Mg(2+) as a cofactor. Mn(2+) serves as cofactor.

The protein localises to the cytoplasm. The enzyme catalyses 2 D-alanine + ATP = D-alanyl-D-alanine + ADP + phosphate + H(+). It functions in the pathway cell wall biogenesis; peptidoglycan biosynthesis. Functionally, cell wall formation. The protein is D-alanine--D-alanine ligase of Pectobacterium carotovorum subsp. carotovorum (strain PC1).